The primary structure comprises 442 residues: Adenylosuccinate synthetase (442 aa).

GTP-binding positions include 30–36 (GDEGKGK) and 58–60 (GHT). The active-site Proton acceptor is aspartate 31. Residues aspartate 31 and glycine 58 each coordinate Mg(2+). IMP-binding positions include 31–34 (DEGK), 56–59 (NAGH), threonine 148, arginine 162, asparagine 241, threonine 256, and arginine 320. Residue histidine 59 is the Proton donor of the active site. 316 to 322 (TTTGRRR) provides a ligand contact to substrate. GTP-binding positions include arginine 322, 348 to 350 (KLD), and 430 to 432 (GVG).

It belongs to the adenylosuccinate synthetase family. In terms of assembly, homodimer. Requires Mg(2+) as cofactor.

It localises to the cytoplasm. The catalysed reaction is IMP + L-aspartate + GTP = N(6)-(1,2-dicarboxyethyl)-AMP + GDP + phosphate + 2 H(+). It participates in purine metabolism; AMP biosynthesis via de novo pathway; AMP from IMP: step 1/2. Plays an important role in the de novo pathway and in the salvage pathway of purine nucleotide biosynthesis. Catalyzes the first committed step in the biosynthesis of AMP from IMP. The sequence is that of Adenylosuccinate synthetase from Trichoplax adhaerens (Trichoplax reptans).